Consider the following 589-residue polypeptide: ATP-dependent lipid A-core flippase (589 aa).

Transmembrane regions (helical) follow at residues 37–57, 72–92, 151–171, 173–193, 260–280, and 286–306; these read ALAIGATIVASATEPFVPALL, LWLVPLALMLLFTVRGLSGFL, IMKLARDVLTLLALIGYLVYL, WKLMLVVALLFPAVAFVIQVL, SAITQVLAAMALSAVISIALL, and TTTVGGFVAFVTAMLLLIAPV. The ABC transmembrane type-1 domain maps to 37–318; that stretch reads ALAIGATIVA…LSDAATPVTR (282 aa). Residues 350-584 form the ABC transporter domain; it reads IEFADVSVIY…NGAYAHLYRL (235 aa). ATP is bound at residue 384-391; sequence GASGSGKT.

The protein belongs to the ABC transporter superfamily. Lipid exporter (TC 3.A.1.106) family. In terms of assembly, homodimer.

It localises to the cell inner membrane. The catalysed reaction is ATP + H2O + lipid A-core oligosaccharideSide 1 = ADP + phosphate + lipid A-core oligosaccharideSide 2.. In terms of biological role, involved in lipopolysaccharide (LPS) biosynthesis. Translocates lipid A-core from the inner to the outer leaflet of the inner membrane. Transmembrane domains (TMD) form a pore in the inner membrane and the ATP-binding domain (NBD) is responsible for energy generation. In Polaromonas sp. (strain JS666 / ATCC BAA-500), this protein is ATP-dependent lipid A-core flippase.